A 315-amino-acid polypeptide reads, in one-letter code: tRNA pseudouridine synthase B (315 aa).

Catalysis depends on Asp-47, which acts as the Nucleophile.

This sequence belongs to the pseudouridine synthase TruB family. Type 1 subfamily.

The enzyme catalyses uridine(55) in tRNA = pseudouridine(55) in tRNA. Functionally, responsible for synthesis of pseudouridine from uracil-55 in the psi GC loop of transfer RNAs. This Shewanella pealeana (strain ATCC 700345 / ANG-SQ1) protein is tRNA pseudouridine synthase B.